Here is a 274-residue protein sequence, read N- to C-terminus: Large ribosomal subunit protein uL2 (274 aa).

A disordered region spans residues 228 to 254; sequence VDHPMGGGEGRASGGHPRSRKGLYAKG. Over residues 244–254 the composition is skewed to basic residues; sequence PRSRKGLYAKG.

It belongs to the universal ribosomal protein uL2 family. In terms of assembly, part of the 50S ribosomal subunit. Forms a bridge to the 30S subunit in the 70S ribosome.

One of the primary rRNA binding proteins. Required for association of the 30S and 50S subunits to form the 70S ribosome, for tRNA binding and peptide bond formation. It has been suggested to have peptidyltransferase activity; this is somewhat controversial. Makes several contacts with the 16S rRNA in the 70S ribosome. In Azobacteroides pseudotrichonymphae genomovar. CFP2, this protein is Large ribosomal subunit protein uL2.